The primary structure comprises 978 residues: Peroxisomal ATPase PEX6 (978 aa).

R119 is modified (omega-N-methylarginine). ATP-binding positions include 470-477 and 742-749; these read GPPGSGKT and GPPGTGKT.

Belongs to the AAA ATPase family. In terms of assembly, interacts with PEX1; forming the PEX1-PEX6 AAA ATPase complex, which is composed of a heterohexamer formed by a trimer of PEX1-PEX6 dimers. Interacts with PEX26; interaction is direct and promotes recruitment to peroxisomal membranes. Interacts with ZFAND6.

It is found in the cytoplasm. The protein resides in the cytosol. It localises to the peroxisome membrane. The protein localises to the cell projection. Its subcellular location is the cilium. It is found in the photoreceptor outer segment. It carries out the reaction ATP + H2O = ADP + phosphate + H(+). Its function is as follows. Component of the PEX1-PEX6 AAA ATPase complex, a protein dislocase complex that mediates the ATP-dependent extraction of the PEX5 receptor from peroxisomal membranes, an essential step for PEX5 recycling. Specifically recognizes PEX5 monoubiquitinated at 'Cys-11', and pulls it out of the peroxisome lumen through the PEX2-PEX10-PEX12 retrotranslocation channel. Extraction by the PEX1-PEX6 AAA ATPase complex is accompanied by unfolding of the TPR repeats and release of bound cargo from PEX5. This Rattus norvegicus (Rat) protein is Peroxisomal ATPase PEX6.